The following is a 97-amino-acid chain: Large ribosomal subunit protein uL23 (97 aa).

The protein belongs to the universal ribosomal protein uL23 family. Part of the 50S ribosomal subunit. Contacts protein L29, and trigger factor when it is bound to the ribosome.

Its function is as follows. One of the early assembly proteins it binds 23S rRNA. One of the proteins that surrounds the polypeptide exit tunnel on the outside of the ribosome. Forms the main docking site for trigger factor binding to the ribosome. This is Large ribosomal subunit protein uL23 from Bartonella henselae (strain ATCC 49882 / DSM 28221 / CCUG 30454 / Houston 1) (Rochalimaea henselae).